The primary structure comprises 336 residues: Aldehyde reductase AdhA (336 aa).

8 residues coordinate Zn(2+): cysteine 36, cysteine 39, histidine 61, cysteine 92, cysteine 95, cysteine 98, cysteine 106, and cysteine 148.

The protein belongs to the zinc-containing alcohol dehydrogenase family. As to quaternary structure, homotetramer. Requires Zn(2+) as cofactor.

Its subcellular location is the cytoplasm. The catalysed reaction is a primary alcohol + NADP(+) = an aldehyde + NADPH + H(+). Its function is as follows. Active on a wide variety of primary alcohols and their corresponding aldehydes, but not against ketones nor secondary alcohols. Active on aliphatic compounds up to 5 carbons in length and aromatic alcohols, less effective on branched-chain primary alcohols. Prefers NADPH to NADH. Its catalytic efficiency is greatest for aldehydes, suggesting the reduction of aromatic and medium-chain aliphatic aldehydes is its in vivo activity. Plays a role in tolerance to internally produced ethanol. The sequence is that of Aldehyde reductase AdhA from Synechocystis sp. (strain ATCC 27184 / PCC 6803 / Kazusa).